The sequence spans 423 residues: MLKEEDKIFTNLHGGQIHDLKSSKKRGDWDNTKALLDKGRDFIIEEIKKSGLRGRGGAGFSTGMKWSFMPKNSEKPCYLVVNADESEPGTCKDRDILRFEPHKLIEGCLLASFAIGANNCYIYIRGEFYNEASNIQRALDEAYKDRLIGKNACGSGFDCNIYLHRGAGAYICGEETALLESLEGKKGMPRLKPPFPAGFGLYGCPTTINNVESIAVVPTILRRRASWFASIGKPNNTGTKIFCISGHVNKPCNVEEAMGISLKELIEKYAGGVRGGWDNLKAIIPGGSSVPLLPKSLCEVDMDFDSLRTVGSGLGTGGIIVMDKSTDIIYAIARLSKFYMHESCGQCTPCREGTGWMWRVMIRLVKGNAKKSEIDELLNVTKEIEGHTICALGDAAAWPIQGLIRHFRSEIEDRIKSYSVAIS.

54-63 (GRGGAGFSTG) contributes to the NAD(+) binding site. 166–213 (GAGAYICGEETALLESLEGKKGMPRLKPPFPAGFGLYGCPTTINNVES) is an FMN binding site. [4Fe-4S] cluster is bound by residues Cys344, Cys347, Cys350, and Cys390.

Belongs to the complex I 51 kDa subunit family. The cofactor is FMN. Requires [4Fe-4S] cluster as cofactor.

It carries out the reaction a quinone + NADH + 5 H(+)(in) = a quinol + NAD(+) + 4 H(+)(out). In terms of biological role, NDH-1 shuttles electrons from NADH, via FMN and iron-sulfur (Fe-S) centers, to quinones in the respiratory chain. Couples the redox reaction to proton translocation (for every two electrons transferred, four hydrogen ions are translocated across the cytoplasmic membrane), and thus conserves the redox energy in a proton gradient. The polypeptide is NADH-quinone oxidoreductase subunit F (nuoF) (Rickettsia akari (strain Hartford)).